The sequence spans 333 residues: Malate dehydrogenase (333 aa).

NAD(+) contacts are provided by residues 10–15 and Asp34; that span reads GGGQIG. Substrate is bound by residues Arg83 and Arg89. NAD(+) is bound by residues Asn96 and 119–121; that span reads ITN. Residues Asn121 and Arg152 each contribute to the substrate site. The Proton acceptor role is filled by His176.

The protein belongs to the LDH/MDH superfamily. MDH type 3 family.

The catalysed reaction is (S)-malate + NAD(+) = oxaloacetate + NADH + H(+). Functionally, catalyzes the reversible oxidation of malate to oxaloacetate. The polypeptide is Malate dehydrogenase (Parvibaculum lavamentivorans (strain DS-1 / DSM 13023 / NCIMB 13966)).